We begin with the raw amino-acid sequence, 153 residues long: Penitrem biosynthesis cluster 1 protein I (153 aa).

The protein operates within secondary metabolite biosynthesis. Its function is as follows. Part of the gene cluster that mediates the biosynthesis of the indole diterpenes penitrems. The geranylgeranyl diphosphate (GGPP) synthase ptmG catalyzes the first step in penitrem biosynthesis via conversion of farnesyl pyrophosphate and isopentyl pyrophosphate into geranylgeranyl pyrophosphate (GGPP). Condensation of indole-3-glycerol phosphate with GGPP by the prenyl transferase ptmC then forms 3-geranylgeranylindole (3-GGI). Epoxidation by the FAD-dependent monooxygenase ptmM leads to a epoxidized-GGI that is substrate of the terpene cyclase ptmB for cyclization to yield paspaline. Paspaline is subsequently converted to 13-desoxypaxilline by the cytochrome P450 monooxygenase ptmP, the latter being then converted to paxilline by the cytochrome P450 monooxygenase ptmQ. Paxilline is converted to beta-paxitriol via C-10 ketoreduction by the short-chain dehydrogenase ptmH which can be monoprenylated at the C-20 by the indole diterpene prenyltransferase ptmD. A two-step elimination (acetylation and elimination) process performed by the O-acetyltransferase ptmV and ptmI leads to the production of the prenylated form of penijanthine. The FAD-linked oxidoreductase ptmO then converts the prenylated form of penijanthine into PC-M5 which is in turn transformed into PC-M4 by the aromatic dimethylallyltransferase ptmE. Five sequential oxidative transformations performed by the cytochrome P450 monooxygenases ptmK, ptmU, ptmL, ptmN and ptmJ yield the various penitrem compounds. PtmK, ptmU and ptmM are involved in the formation of the key bicyclic ring of penitrem C via the formation of the intermediates secopenitrem D and penitrem D. PtmL catalyzes the epoxidation of penitrem D and C to yield penitrem B and F, respectively. PtmJ catalyzes the last benzylic hydroxylation to convert penitrem B to prenitrem E and penitrem F to penitrem A. This chain is Penitrem biosynthesis cluster 1 protein I, found in Penicillium ochrochloron.